The following is a 481-amino-acid chain: MTIIKGNRCDWEVVIGLEVHAQVISNSKLFSGASTKTYDALPNTQVALFDVAMPGMLPVLNEYCVYQAIKTGIALSCKINKYSAFDRKNYFYPDLPSGYQITQFYYPIATEGKIVLEDHDMKEIRIARIHLEQDAGKSIHEFDKTYIDFNRAGVALMEIVSEPDFRSIEEVAEYLKKLRMILRFIETCDGDMEKGSLRCDANVSVKPVGSSELGIRSEIKNLNSIRYVMQAIEYEANRQVNALENGEIVTQNTLLFDVTSGQTRVIRTKEDAHDYRYFPDPDLFPLKIDDQYIDHVRSSLPELPMQKRERYTNDFSLSKYDADILSSDKDVAIYFEKVAEKHDGKLAASWITGELFGRLNRLGITIGESSVTAEDLIQLLDLIVNNTISGKIAKQVFDMMFESGKSPALIVSEHGLKQVSDENALSVIVERVLKNNASKVVEYKQGKEKLFGYFVGQVMKETQGKANPDMVNSIIKQQLEN.

It belongs to the GatB/GatE family. GatB subfamily. As to quaternary structure, heterotrimer of A, B and C subunits.

The catalysed reaction is L-glutamyl-tRNA(Gln) + L-glutamine + ATP + H2O = L-glutaminyl-tRNA(Gln) + L-glutamate + ADP + phosphate + H(+). The enzyme catalyses L-aspartyl-tRNA(Asn) + L-glutamine + ATP + H2O = L-asparaginyl-tRNA(Asn) + L-glutamate + ADP + phosphate + 2 H(+). Functionally, allows the formation of correctly charged Asn-tRNA(Asn) or Gln-tRNA(Gln) through the transamidation of misacylated Asp-tRNA(Asn) or Glu-tRNA(Gln) in organisms which lack either or both of asparaginyl-tRNA or glutaminyl-tRNA synthetases. The reaction takes place in the presence of glutamine and ATP through an activated phospho-Asp-tRNA(Asn) or phospho-Glu-tRNA(Gln). The protein is Aspartyl/glutamyl-tRNA(Asn/Gln) amidotransferase subunit B of Ehrlichia chaffeensis (strain ATCC CRL-10679 / Arkansas).